We begin with the raw amino-acid sequence, 393 residues long: tRNA(Met) cytidine acetate ligase (393 aa).

Glycine 81, asparagine 142, and arginine 167 together coordinate ATP.

This sequence belongs to the TmcAL family.

It is found in the cytoplasm. The enzyme catalyses cytidine(34) in elongator tRNA(Met) + acetate + ATP = N(4)-acetylcytidine(34) in elongator tRNA(Met) + AMP + diphosphate. In terms of biological role, catalyzes the formation of N(4)-acetylcytidine (ac(4)C) at the wobble position of elongator tRNA(Met), using acetate and ATP as substrates. First activates an acetate ion to form acetyladenylate (Ac-AMP) and then transfers the acetyl group to tRNA to form ac(4)C34. This Bacillus anthracis (strain A0248) protein is tRNA(Met) cytidine acetate ligase.